A 95-amino-acid chain; its full sequence is Aspartyl/glutamyl-tRNA(Asn/Gln) amidotransferase subunit C (95 aa).

This sequence belongs to the GatC family. Heterotrimer of A, B and C subunits.

It carries out the reaction L-glutamyl-tRNA(Gln) + L-glutamine + ATP + H2O = L-glutaminyl-tRNA(Gln) + L-glutamate + ADP + phosphate + H(+). The enzyme catalyses L-aspartyl-tRNA(Asn) + L-glutamine + ATP + H2O = L-asparaginyl-tRNA(Asn) + L-glutamate + ADP + phosphate + 2 H(+). Its function is as follows. Allows the formation of correctly charged Asn-tRNA(Asn) or Gln-tRNA(Gln) through the transamidation of misacylated Asp-tRNA(Asn) or Glu-tRNA(Gln) in organisms which lack either or both of asparaginyl-tRNA or glutaminyl-tRNA synthetases. The reaction takes place in the presence of glutamine and ATP through an activated phospho-Asp-tRNA(Asn) or phospho-Glu-tRNA(Gln). In Allorhizobium ampelinum (strain ATCC BAA-846 / DSM 112012 / S4) (Agrobacterium vitis (strain S4)), this protein is Aspartyl/glutamyl-tRNA(Asn/Gln) amidotransferase subunit C.